Here is a 547-residue protein sequence, read N- to C-terminus: Undecaprenyl phosphate-alpha-4-amino-4-deoxy-L-arabinose arabinosyl transferase (547 aa).

Transmembrane regions (helical) follow at residues 83 to 103 (FASA…ALQL), 111 to 131 (FLAS…TYSV), 174 to 194 (FLTK…PYVI), 205 to 225 (FGPL…IAVH), 253 to 273 (APFW…LGLL), 286 to 306 (ISPE…FFSI), 311 to 331 (LLTY…ANAV), 346 to 366 (AWLN…LAFS), 378 to 398 (GALA…FIQL), and 408 to 428 (SALC…QSLI).

It belongs to the glycosyltransferase 83 family.

It is found in the cell inner membrane. It catalyses the reaction 4-amino-4-deoxy-alpha-L-arabinopyranosyl di-trans,octa-cis-undecaprenyl phosphate + lipid IVA = lipid IIA + di-trans,octa-cis-undecaprenyl phosphate.. It functions in the pathway lipopolysaccharide metabolism; 4-amino-4-deoxy-beta-L-arabinose-lipid A biosynthesis. Its function is as follows. Catalyzes the transfer of the L-Ara4N moiety of the glycolipid undecaprenyl phosphate-alpha-L-Ara4N to lipid A. The modified arabinose is attached to lipid A and is required for resistance to polymyxin and cationic antimicrobial peptides. In Aeromonas hydrophila subsp. hydrophila (strain ATCC 7966 / DSM 30187 / BCRC 13018 / CCUG 14551 / JCM 1027 / KCTC 2358 / NCIMB 9240 / NCTC 8049), this protein is Undecaprenyl phosphate-alpha-4-amino-4-deoxy-L-arabinose arabinosyl transferase.